The following is a 243-amino-acid chain: HTH-type quorum sensing-dependent transcriptional regulator RpaR (243 aa).

Positions 174–239 (KPIRRNRLTP…AAVAKALTLG (66 aa)) constitute an HTH luxR-type domain. The H-T-H motif DNA-binding region spans 198–217 (AWEISVILCITERTVKFHLI).

It belongs to the autoinducer-regulated transcriptional regulatory protein family.

Responds to the quorum-sensing autoinducer 4-coumaroyl-homoserine lactone to regulate expression of several genes. Represses expression of rpaI in the absence of the inducer. The protein is HTH-type quorum sensing-dependent transcriptional regulator RpaR of Rhodopseudomonas palustris (strain ATCC BAA-98 / CGA009).